Consider the following 457-residue polypeptide: Phenylalanine-4-hydroxylase (457 aa).

The ACT domain maps to 31 to 108; it reads TIVFTLREKA…EKKVLVQDWN (78 aa). Fe cation-binding residues include His285, His290, and Glu330.

The protein belongs to the biopterin-dependent aromatic amino acid hydroxylase family. As to quaternary structure, homotetramer. The cofactor is Fe(2+). In terms of tissue distribution, expressed in the seam cells of the lateral hypodermis, in the ventral hypodermis and in the hyp7 hypodermal syncytium, in hypodermal cells in the tail and in body wall muscle cells (at protein level).

Its subcellular location is the cytoplasm. It carries out the reaction (6R)-L-erythro-5,6,7,8-tetrahydrobiopterin + L-phenylalanine + O2 = (4aS,6R)-4a-hydroxy-L-erythro-5,6,7,8-tetrahydrobiopterin + L-tyrosine. The enzyme catalyses (6R)-L-erythro-5,6,7,8-tetrahydrobiopterin + L-tryptophan + O2 = 5-hydroxy-L-tryptophan + (4aS,6R)-4a-hydroxy-L-erythro-5,6,7,8-tetrahydrobiopterin. It functions in the pathway amino-acid degradation; L-phenylalanine degradation; acetoacetate and fumarate from L-phenylalanine: step 1/6. Its activity is regulated as follows. Inhibited by tetrahydrobiopterin. Unlike its mammalian orthologs, pah-1 does not exhibit allosteric binding behavior for phenylalanine. Functionally, catalyzes the hydroxylation of L-phenylalanine to L-tyrosine. Catalyzes the hydroxylation of tryptophan to 5-hydroxy-L-tryptophan. Plays a role in the biosynthesis of a melanin-like cuticle pigment. The polypeptide is Phenylalanine-4-hydroxylase (Caenorhabditis elegans).